Reading from the N-terminus, the 177-residue chain is Adenine phosphoribosyltransferase (177 aa).

The protein belongs to the purine/pyrimidine phosphoribosyltransferase family. As to quaternary structure, homodimer.

It is found in the cytoplasm. It catalyses the reaction AMP + diphosphate = 5-phospho-alpha-D-ribose 1-diphosphate + adenine. It functions in the pathway purine metabolism; AMP biosynthesis via salvage pathway; AMP from adenine: step 1/1. Catalyzes a salvage reaction resulting in the formation of AMP, that is energically less costly than de novo synthesis. This is Adenine phosphoribosyltransferase from Idiomarina loihiensis (strain ATCC BAA-735 / DSM 15497 / L2-TR).